A 365-amino-acid chain; its full sequence is Probable dual-specificity RNA methyltransferase RlmN (365 aa).

The active-site Proton acceptor is Glu-111. Residues 117 to 351 (ADDRMTACIS…VNIRRSRGKD (235 aa)) enclose the Radical SAM core domain. Cys-124 and Cys-356 are disulfide-bonded. [4Fe-4S] cluster contacts are provided by Cys-131, Cys-135, and Cys-138. Residues 182-183 (GE), Ser-214, 237-239 (SLH), and Asn-313 contribute to the S-adenosyl-L-methionine site. Cys-356 serves as the catalytic S-methylcysteine intermediate.

It belongs to the radical SAM superfamily. RlmN family. [4Fe-4S] cluster serves as cofactor.

The protein resides in the cytoplasm. The enzyme catalyses adenosine(2503) in 23S rRNA + 2 reduced [2Fe-2S]-[ferredoxin] + 2 S-adenosyl-L-methionine = 2-methyladenosine(2503) in 23S rRNA + 5'-deoxyadenosine + L-methionine + 2 oxidized [2Fe-2S]-[ferredoxin] + S-adenosyl-L-homocysteine. It catalyses the reaction adenosine(37) in tRNA + 2 reduced [2Fe-2S]-[ferredoxin] + 2 S-adenosyl-L-methionine = 2-methyladenosine(37) in tRNA + 5'-deoxyadenosine + L-methionine + 2 oxidized [2Fe-2S]-[ferredoxin] + S-adenosyl-L-homocysteine. Specifically methylates position 2 of adenine 2503 in 23S rRNA and position 2 of adenine 37 in tRNAs. The protein is Probable dual-specificity RNA methyltransferase RlmN of Cytophaga hutchinsonii (strain ATCC 33406 / DSM 1761 / CIP 103989 / NBRC 15051 / NCIMB 9469 / D465).